We begin with the raw amino-acid sequence, 139 residues long: Superoxide dismutase [Cu-Zn] (139 aa).

Cys6 carries S-palmitoyl cysteine lipidation. Cu cation contacts are provided by His47 and His49. Zn(2+) contacts are provided by His72, His81, and Asp84. His114 serves as a coordination point for Cu cation. A compositionally biased stretch (basic and acidic residues) spans 118 to 129 (DDLGKGGNDESL). A disordered region spans residues 118–139 (DDLGKGGNDESLKTGNAGGRMA).

The protein belongs to the Cu-Zn superoxide dismutase family. In terms of assembly, homodimer. Cu cation is required as a cofactor. It depends on Zn(2+) as a cofactor.

Its subcellular location is the cytoplasm. It is found in the nucleus. The catalysed reaction is 2 superoxide + 2 H(+) = H2O2 + O2. In terms of biological role, destroys radicals which are normally produced within the cells and which are toxic to biological systems. The polypeptide is Superoxide dismutase [Cu-Zn] (sod1) (Lampanyctus crocodilus (Jewel lanternfish)).